The chain runs to 134 residues: Small ribosomal subunit protein uS8 (134 aa).

The protein belongs to the universal ribosomal protein uS8 family. Part of the 30S ribosomal subunit. Contacts proteins S5 and S12.

Functionally, one of the primary rRNA binding proteins, it binds directly to 16S rRNA central domain where it helps coordinate assembly of the platform of the 30S subunit. In Thermosipho africanus (strain TCF52B), this protein is Small ribosomal subunit protein uS8.